We begin with the raw amino-acid sequence, 234 residues long: Adenosine 5'-phosphosulfate reductase (234 aa).

Residues C120, C121, C203, and C206 each coordinate [4Fe-4S] cluster. C229 functions as the Nucleophile; cysteine thiosulfonate intermediate in the catalytic mechanism.

Belongs to the PAPS reductase family. CysH subfamily. [4Fe-4S] cluster is required as a cofactor.

Its subcellular location is the cytoplasm. The catalysed reaction is [thioredoxin]-disulfide + sulfite + AMP + 2 H(+) = adenosine 5'-phosphosulfate + [thioredoxin]-dithiol. Its pathway is sulfur metabolism; hydrogen sulfide biosynthesis; sulfite from sulfate. In terms of biological role, catalyzes the formation of sulfite from adenosine 5'-phosphosulfate (APS) using thioredoxin as an electron donor. This is Adenosine 5'-phosphosulfate reductase from Bacillus cereus (strain ZK / E33L).